The chain runs to 304 residues: 17-beta-hydroxysteroid dehydrogenase 13 (304 aa).

The signal sequence occupies residues Met-1–Leu-19. Position 33 is a phosphoserine (Ser-33). An NAD(+)-binding site is contributed by Leu-40–Asp-67. Lys-79 bears the N6-acetyllysine mark. Residue Ser-172 participates in substrate binding. Tyr-185 acts as the Proton acceptor in catalysis. Lys-189 lines the NAD(+) pocket. The tract at residues Ser-276 to His-304 is disordered.

The protein belongs to the short-chain dehydrogenases/reductases (SDR) family. In terms of tissue distribution, expressed predominantly in the liver (at protein level).

It localises to the lipid droplet. The protein resides in the endoplasmic reticulum. It carries out the reaction 17beta-estradiol + NAD(+) = estrone + NADH + H(+). It catalyses the reaction all-trans-retinol + NAD(+) = all-trans-retinal + NADH + H(+). The enzyme catalyses all-trans-retinal + NAD(+) + H2O = all-trans-retinoate + NADH + 2 H(+). Its function is as follows. Plays a pivotal role in hepatic lipid metabolism. In vitro, it catalyzes the oxidation of a variety of lipid substrates, including 17beta-estradiol, retinol, retinal, and leukotriene B4. The protein is 17-beta-hydroxysteroid dehydrogenase 13 (Hsd17b13) of Mus musculus (Mouse).